An 81-amino-acid polypeptide reads, in one-letter code: Sulfur carrier protein TusA (81 aa).

The Cysteine persulfide intermediate role is filled by C19.

The protein belongs to the sulfur carrier protein TusA family.

The protein resides in the cytoplasm. Sulfur carrier protein which probably makes part of a sulfur-relay system. The chain is Sulfur carrier protein TusA from Aeromonas salmonicida (strain A449).